Reading from the N-terminus, the 262-residue chain is Indole-3-glycerol phosphate synthase (262 aa).

Belongs to the TrpC family.

It carries out the reaction 1-(2-carboxyphenylamino)-1-deoxy-D-ribulose 5-phosphate + H(+) = (1S,2R)-1-C-(indol-3-yl)glycerol 3-phosphate + CO2 + H2O. Its pathway is amino-acid biosynthesis; L-tryptophan biosynthesis; L-tryptophan from chorismate: step 4/5. The sequence is that of Indole-3-glycerol phosphate synthase from Leptothrix cholodnii (strain ATCC 51168 / LMG 8142 / SP-6) (Leptothrix discophora (strain SP-6)).